Reading from the N-terminus, the 609-residue chain is Phosphoenolpyruvate carboxykinase [GTP] (609 aa).

Substrate contacts are provided by residues Arg81 and 220–222; that span reads YGG. Mn(2+)-binding residues include Lys229 and His249. Position 271 (Ser271) interacts with substrate. 272-277 is a GTP binding site; it reads ACGKTN. Residue Cys273 is part of the active site. Mn(2+) is bound at residue Asp296. Residue 387–389 participates in substrate binding; the sequence is NSR. GTP-binding positions include Arg389, Arg420, and 515–518; that span reads FGEN.

Belongs to the phosphoenolpyruvate carboxykinase [GTP] family. Monomer. Requires Mn(2+) as cofactor.

Its subcellular location is the cytoplasm. The catalysed reaction is oxaloacetate + GTP = phosphoenolpyruvate + GDP + CO2. Its pathway is carbohydrate biosynthesis; gluconeogenesis. Catalyzes the conversion of oxaloacetate (OAA) to phosphoenolpyruvate (PEP), the rate-limiting step in the metabolic pathway that produces glucose from lactate and other precursors derived from the citric acid cycle. The protein is Phosphoenolpyruvate carboxykinase [GTP] of Mycolicibacterium paratuberculosis (strain ATCC BAA-968 / K-10) (Mycobacterium paratuberculosis).